A 338-amino-acid polypeptide reads, in one-letter code: Phenylalanine--tRNA ligase alpha subunit (338 aa).

A disordered region spans residues 71–101 (QFEEKRSSLSQQTSSSDTYQSLPDLTLPGRQ). Low complexity predominate over residues 78–92 (SLSQQTSSSDTYQSL). Residue E253 participates in Mg(2+) binding.

This sequence belongs to the class-II aminoacyl-tRNA synthetase family. Phe-tRNA synthetase alpha subunit type 1 subfamily. In terms of assembly, tetramer of two alpha and two beta subunits. It depends on Mg(2+) as a cofactor.

It localises to the cytoplasm. It catalyses the reaction tRNA(Phe) + L-phenylalanine + ATP = L-phenylalanyl-tRNA(Phe) + AMP + diphosphate + H(+). This Desulfotalea psychrophila (strain LSv54 / DSM 12343) protein is Phenylalanine--tRNA ligase alpha subunit.